The primary structure comprises 65 residues: Putative primary metabolism protein prl65 (65 aa).

The disordered stretch occupies residues 1–25; that stretch reads MTKYSKGNKVEYHPIGGPSGTSTST.

Its function is as follows. May play a role in primary metabolism. The polypeptide is Putative primary metabolism protein prl65 (Schizosaccharomyces pombe (strain 972 / ATCC 24843) (Fission yeast)).